Consider the following 146-residue polypeptide: Hemoglobin subunit beta-2 (146 aa).

Residues 2–146 (HWSAEEKQLI…VAHALARRYH (145 aa)) enclose the Globin domain. Positions 63 and 92 each coordinate heme b.

Belongs to the globin family. As to quaternary structure, heterotetramer of two alpha chains and two beta chains. Red blood cells.

Its function is as follows. Involved in oxygen transport from the lung to the various peripheral tissues. The protein is Hemoglobin subunit beta-2 (HBB2) of Naja naja (Indian cobra).